A 499-amino-acid polypeptide reads, in one-letter code: Phenylalanine--tRNA ligase alpha subunit (499 aa).

Residues Thr-342, 381–383 (QID), and Phe-422 contribute to the L-phenylalanine site. Glu-424 provides a ligand contact to Mg(2+). Residue Phe-447 coordinates L-phenylalanine.

The protein belongs to the class-II aminoacyl-tRNA synthetase family. Phe-tRNA synthetase alpha subunit type 2 subfamily. Tetramer of two alpha and two beta subunits. Mg(2+) serves as cofactor.

Its subcellular location is the cytoplasm. The enzyme catalyses tRNA(Phe) + L-phenylalanine + ATP = L-phenylalanyl-tRNA(Phe) + AMP + diphosphate + H(+). The polypeptide is Phenylalanine--tRNA ligase alpha subunit (Pyrococcus horikoshii (strain ATCC 700860 / DSM 12428 / JCM 9974 / NBRC 100139 / OT-3)).